Reading from the N-terminus, the 470-residue chain is Xaa-Pro aminopeptidase 2 (470 aa).

Aspartate 287, aspartate 299, histidine 382, glutamate 413, and glutamate 437 together coordinate Mn(2+).

It belongs to the peptidase M24B family. Homodimer. Mn(2+) serves as cofactor.

It catalyses the reaction Release of any N-terminal amino acid, including proline, that is linked to proline, even from a dipeptide or tripeptide.. The chain is Xaa-Pro aminopeptidase 2 (pepP2) from Streptomyces coelicolor (strain ATCC BAA-471 / A3(2) / M145).